The primary structure comprises 987 residues: AP3-complex subunit beta-A (987 aa).

Positions 586–662 (QDQLSDLDKQ…ISETSVSADQ (77 aa)) are disordered. Residues 603-613 (DGSEESSETGD) are compositionally biased toward acidic residues. Positions 614-631 (ENGSSDYDSESSNGSDFS) are enriched in low complexity.

Belongs to the adaptor complexes large subunit family. As to quaternary structure, adaptor protein complex 3 (AP-3) is a heterotetramer composed of two large adaptins (delta-type subunit and beta-type subunit), a medium adaptin (mu-type subunit) and a small adaptin (sigma-type subunit).

It localises to the cytoplasm. It is found in the golgi apparatus. The protein resides in the cytoplasmic vesicle membrane. Its function is as follows. Part of the AP-3 complex, an adaptor-related complex which seems to be clathrin-associated. The complex is associated with the Golgi region as well as more peripheral structures. It facilitates the budding of vesicles from the Golgi membrane and may be directly involved in trafficking to the vacuole. It also function in maintaining the identity of lytic vacuoles and in regulating the transition between storage and lytic vacuoles. The protein is AP3-complex subunit beta-A (AP3BA) of Arabidopsis thaliana (Mouse-ear cress).